A 136-amino-acid polypeptide reads, in one-letter code: ATP synthase epsilon chain, chloroplastic (136 aa).

Belongs to the ATPase epsilon chain family. In terms of assembly, F-type ATPases have 2 components, CF(1) - the catalytic core - and CF(0) - the membrane proton channel. CF(1) has five subunits: alpha(3), beta(3), gamma(1), delta(1), epsilon(1). CF(0) has three main subunits: a, b and c.

Its subcellular location is the plastid. It is found in the chloroplast thylakoid membrane. Produces ATP from ADP in the presence of a proton gradient across the membrane. In Tetradesmus obliquus (Green alga), this protein is ATP synthase epsilon chain, chloroplastic.